We begin with the raw amino-acid sequence, 281 residues long: Probable endonuclease 4 (281 aa).

Residues His-70, His-110, Glu-146, Asp-180, His-183, His-217, Asp-230, His-232, and Glu-262 each coordinate Zn(2+).

This sequence belongs to the AP endonuclease 2 family. Zn(2+) serves as cofactor.

The enzyme catalyses Endonucleolytic cleavage to 5'-phosphooligonucleotide end-products.. Functionally, endonuclease IV plays a role in DNA repair. It cleaves phosphodiester bonds at apurinic or apyrimidinic (AP) sites, generating a 3'-hydroxyl group and a 5'-terminal sugar phosphate. This chain is Probable endonuclease 4, found in Nitratiruptor sp. (strain SB155-2).